A 164-amino-acid polypeptide reads, in one-letter code: Single-stranded DNA-binding protein 2 (164 aa).

Positions 5–109 (INKVILVGNL…IVADEMQMLG (105 aa)) constitute an SSB domain. The disordered stretch occupies residues 105–164 (MQMLGGRSDGGGMGGGGERPQRQTSQRQDYAPRRQARQPSQSPQSSPPPMDDFADDDIPF). Positions 111-122 (RSDGGGMGGGGE) are enriched in gly residues. The Important for interaction with partner proteins motif lies at 159 to 164 (DDDIPF).

Homotetramer.

Functionally, plays an important role in DNA replication, recombination and repair. Binds to ssDNA and to an array of partner proteins to recruit them to their sites of action during DNA metabolism. In Xylella fastidiosa (strain 9a5c), this protein is Single-stranded DNA-binding protein 2 (ssb2).